The primary structure comprises 254 residues: SLA class II histocompatibility antigen, DQ haplotype C alpha chain (254 aa).

The N-terminal stretch at 1-23 (MVPGRVLMWGALALTTVMSACGG) is a signal peptide. An alpha-1 region spans residues 24 to 120 (EDIAADHVAS…KVPEVTVFSK (97 aa)). Residues 24 to 216 (EDIAADHVAS…IPAPMSELTE (193 aa)) are Extracellular-facing. Asparagine 104 and asparagine 144 each carry an N-linked (GlcNAc...) asparagine glycan. Residues 113-204 (PEVTVFSKSP…LDKPLLKHWE (92 aa)) form the Ig-like C1-type domain. Positions 121–203 (SPVILGQPNT…GLDKPLLKHW (83 aa)) are alpha-2. A disulfide bridge connects residues cysteine 133 and cysteine 188. Positions 204-216 (EPEIPAPMSELTE) are connecting peptide. The helical transmembrane segment at 217 to 239 (TVVCALGLIVGLVGIVVGTVFII) threads the bilayer. Topologically, residues 240-254 (QGLRSGGPSRHQGSL) are cytoplasmic.

This sequence belongs to the MHC class II family.

It is found in the membrane. In Sus scrofa (Pig), this protein is SLA class II histocompatibility antigen, DQ haplotype C alpha chain.